Here is a 93-residue protein sequence, read N- to C-terminus: Putative membrane protein insertion efficiency factor (93 aa).

The segment at 72-93 (VPEHFPSWRGPHPKTPSRKTPE) is disordered. A compositionally biased stretch (basic residues) spans 82 to 93 (PHPKTPSRKTPE).

The protein belongs to the UPF0161 family.

It localises to the cell membrane. Functionally, could be involved in insertion of integral membrane proteins into the membrane. The polypeptide is Putative membrane protein insertion efficiency factor (Deinococcus geothermalis (strain DSM 11300 / CIP 105573 / AG-3a)).